The following is a 241-amino-acid chain: HTH-type quorum-sensing regulator RhlR (241 aa).

An HTH luxR-type domain is found at 174 to 239 (LMSNPVCLSH…LAAAYAAALG (66 aa)). Residues 198–217 (SGEIAIILSISESTVNFHHK) constitute a DNA-binding region (H-T-H motif).

It belongs to the autoinducer-regulated transcriptional regulatory protein family. As to quaternary structure, homodimer in the absence of any acyl-L-homoserine lactone. The presence of the autoinducer C4-HSL has no significant effect on dimerization whereas N-(3-oxododecanoyl)-L-homoserine lactone (3O-C12-HSL), the LasR inducer, is able to dissociate the RhlR homodimers into monomers.

The protein localises to the cytoplasm. Its activity is regulated as follows. Activated by interaction with the autoinducer signal molecule N-butanoyl-L-homoserine lactone (C4-HSL or BHL), the product of the RhlI synthase. Is also activated by binding to rosmarinic acid (RA), a homoserine lactone mimic produced by plants, which induces a broad quorum sensing response, including the induction of all major quorum sensing controlled virulence factors. Rosmarinic acid secretion may be a plant defense mechanism to stimulate a premature quorum sensing response. Its function is as follows. Quorum-sensing regulator that controls the expression of multiple virulence factors in response to extracellular signaling molecules called autoinducers. Involved, among others, in the transcriptional regulation of genes that are responsible for rhamnolipid surfactant biosynthesis. Acts by binding to a specific sequence in the rhlAB regulatory region, both in the presence and in the absence of its autoinducer. In the former case it activates transcription of the promoter, whereas in the latter it acts as a transcriptional repressor. Also regulates the expression of the rmlBDAC operon, encoding dTDP-L-rhamnose biosynthetic enzymes, by binding to the rml box in the promoter region. In addition, is involved in the regulation of the production of elastase (lasB) and pyocyanine. In Pseudomonas aeruginosa (strain ATCC 15692 / DSM 22644 / CIP 104116 / JCM 14847 / LMG 12228 / 1C / PRS 101 / PAO1), this protein is HTH-type quorum-sensing regulator RhlR.